The chain runs to 109 residues: T cell receptor alpha variable 26-2 (109 aa).

The N-terminal stretch at 1–19 is a signal peptide; it reads MKLVTSITVLLSLGIMGDA. One can recognise an Ig-like domain in the interval 20 to 109; sequence KTTQPNSMES…AAVYYCILRD (90 aa). A disulfide bond links Cys39 and Cys105. Asn40 carries an N-linked (GlcNAc...) asparagine glycan.

Alpha-beta TR is a heterodimer composed of an alpha and beta chain; disulfide-linked. The alpha-beta TR is associated with the transmembrane signaling CD3 coreceptor proteins to form the TR-CD3 (TcR or TCR). The assembly of alpha-beta TR heterodimers with CD3 occurs in the endoplasmic reticulum where a single alpha-beta TR heterodimer associates with one CD3D-CD3E heterodimer, one CD3G-CD3E heterodimer and one CD247 homodimer forming a stable octameric structure. CD3D-CD3E and CD3G-CD3E heterodimers preferentially associate with TR alpha and TR beta chains, respectively. The association of the CD247 homodimer is the last step of TcR assembly in the endoplasmic reticulum and is required for transport to the cell surface.

The protein resides in the cell membrane. Functionally, v region of the variable domain of T cell receptor (TR) alpha chain that participates in the antigen recognition. Alpha-beta T cell receptors are antigen specific receptors which are essential to the immune response and are present on the cell surface of T lymphocytes. Recognize peptide-major histocompatibility (MH) (pMH) complexes that are displayed by antigen presenting cells (APC), a prerequisite for efficient T cell adaptive immunity against pathogens. Binding of alpha-beta TR to pMH complex initiates TR-CD3 clustering on the cell surface and intracellular activation of LCK that phosphorylates the ITAM motifs of CD3G, CD3D, CD3E and CD247 enabling the recruitment of ZAP70. In turn ZAP70 phosphorylates LAT, which recruits numerous signaling molecules to form the LAT signalosome. The LAT signalosome propagates signal branching to three major signaling pathways, the calcium, the mitogen-activated protein kinase (MAPK) kinase and the nuclear factor NF-kappa-B (NF-kB) pathways, leading to the mobilization of transcription factors that are critical for gene expression and essential for T cell growth and differentiation. The T cell repertoire is generated in the thymus, by V-(D)-J rearrangement. This repertoire is then shaped by intrathymic selection events to generate a peripheral T cell pool of self-MH restricted, non-autoaggressive T cells. Post-thymic interaction of alpha-beta TR with the pMH complexes shapes TR structural and functional avidity. This chain is T cell receptor alpha variable 26-2, found in Homo sapiens (Human).